A 230-amino-acid polypeptide reads, in one-letter code: Eukaryotic translation initiation factor 4E-1 (230 aa).

Residues 1-53 are disordered; that stretch reads MVVEDSQKSTITDEQNPSRVDNDDDDLEDGEILEDADDAASAASKPPSAFLRN. Over residues 8-19 the composition is skewed to polar residues; sequence KSTITDEQNPSR. A compositionally biased stretch (acidic residues) spans 22–38; the sequence is NDDDDLEDGEILEDADD. Residues 39–49 show a composition bias toward low complexity; that stretch reads AASAASKPPSA. 2 EIF4G-binding regions span residues 55–58 and 65–101; these read HPLE and FDNP…NNIH. MRNA contacts are provided by residues 73 to 78, K105, and 123 to 124; these read KQAAWG and WE. Cysteines 128 and 166 form a disulfide. Positions 149-158 are EIF4G-binding; sequence YTLLAMIGEQ. MRNA contacts are provided by residues 173-178 and 218-222; these read RNRQDK and KKHER.

The protein belongs to the eukaryotic initiation factor 4E family. As to quaternary structure, EIF4F is a multi-subunit complex, the composition of which varies with external and internal environmental conditions. It is composed of at least EIF4A, EIF4E and EIF4G. EIF4E is also known to interact with other partners. In higher plants two isoforms of EIF4F have been identified, named isoform EIF4F and isoform EIF(iso)4F. Isoform EIF4F has subunits p220 and p26, whereas isoform EIF(iso)4F has subunits p82 and p28. (Microbial infection) Interacts with potyvirus viral genome-linked protein (VPg); this interaction is possible in susceptible hosts but impaired in resistant plants. In terms of processing, according to the redox status, the Cys-128-Cys-166 disulfide bridge may have a role in regulating protein function by affecting its ability to bind capped mRNA.

The protein resides in the nucleus. Its subcellular location is the cytoplasm. In terms of biological role, component of the protein complex eIF4F, which is involved in the recognition of the mRNA cap, ATP-dependent unwinding of 5'-terminal secondary structure and recruitment of mRNA to the ribosome. Recognizes and binds the 7-methylguanosine-containing mRNA cap during an early step in the initiation of protein synthesis and facilitates ribosome binding by inducing the unwinding of the mRNAs secondary structures. Key component of recessive resistance to potyviruses. (Microbial infection) Susceptibility host factor required for viral infection by recruiting viral RNAs to the host ribosomal complex via an interaction with viral genome-linked protein (VPg). This Phaseolus vulgaris (Kidney bean) protein is Eukaryotic translation initiation factor 4E-1.